Here is a 481-residue protein sequence, read N- to C-terminus: 2-methylisoborneol synthase (481 aa).

2 disordered regions span residues 1 to 125 (MPDS…PVGP) and 139 to 160 (QAAV…GPVV). A compositionally biased stretch (pro residues) spans 11-23 (TSLPEQPPAPPAT). Residues 24 to 33 (APDAPAATVT) show a composition bias toward low complexity. 2 stretches are compositionally biased toward pro residues: residues 52–64 (VTRP…PSMP) and 71–104 (SSPP…PPAT). Positions 105–114 (APETSAATGS) are enriched in low complexity. Mg(2+) is bound by residues Asp-238, Asp-239, Glu-243, Asn-386, Ser-390, and Glu-394.

It belongs to the terpene synthase family. 2-methylisoborneol synthase subfamily. Requires Mg(2+) as cofactor.

It catalyses the reaction (E)-2-methylgeranyl diphosphate + H2O = 2-methylisoborneol + diphosphate. Functionally, catalyzes the cyclization of 2-methylgeranyl diphosphate (2-MeGPP) to 2-methylisoborneol (2-MIB), which likely involves the intermediacy of 2-methyllinalyl diphosphate. The sequence is that of 2-methylisoborneol synthase (tpc) from Streptomyces lasalocidi (Streptomyces lasaliensis).